Reading from the N-terminus, the 134-residue chain is MVKEFAGIKYKLDSQTNFEEYMKAIGVGAIERKAGLALSPVIELEILDGDKFKLTSKTAIKNTEFTFKLGEEFDEETLDGRKVKSTITQDGPNKLVHEQKGDHPTIIIREFSKEQCVITIKLGDLVATRIYKAQ.

Residues Arg-109 and 129–131 (RIY) contribute to the (9Z)-octadecenoate site.

Belongs to the calycin superfamily. Fatty-acid binding protein (FABP) family. Monomer. In terms of tissue distribution, adult flight muscle.

Its subcellular location is the cytoplasm. In terms of biological role, binds fatty acids in a 1:1 molar ratio. The polypeptide is Fatty acid-binding protein, muscle (Schistocerca gregaria (Desert locust)).